Consider the following 467-residue polypeptide: Pancreatic lipase-related protein 3 (467 aa).

Residues 1-17 (MLGIWIVAFLFFGTSRG) form the signal peptide. Residues cysteine 21 and cysteine 27 are joined by a disulfide bond. Asparagine 74 carries an N-linked (GlcNAc...) asparagine glycan. Residues cysteine 107 and cysteine 118 are joined by a disulfide bond. N-linked (GlcNAc...) asparagine glycosylation occurs at asparagine 125. Serine 168 serves as the catalytic Nucleophile. The active-site Charge relay system is aspartate 191. An intrachain disulfide couples cysteine 252 to cysteine 277. The Charge relay system role is filled by histidine 279. 3 disulfides stabilise this stretch: cysteine 301–cysteine 312, cysteine 315–cysteine 320, and cysteine 451–cysteine 467. Positions 355–467 (WRHKLSVKLS…PNILQNLKPC (113 aa)) constitute a PLAT domain.

The protein belongs to the AB hydrolase superfamily. Lipase family. In terms of tissue distribution, overexpressed in hepatocellular carcinoma.

The protein localises to the secreted. The catalysed reaction is a triacylglycerol + H2O = a diacylglycerol + a fatty acid + H(+). The sequence is that of Pancreatic lipase-related protein 3 (PNLIPRP3) from Homo sapiens (Human).